The chain runs to 300 residues: Jacalin-related lectin 32 (300 aa).

Ala-2 carries the post-translational modification N-acetylalanine. Jacalin-type lectin domains are found at residues 2 to 146 (AQKV…YFTT) and 154 to 297 (AKKL…HILP).

Belongs to the jacalin lectin family.

Functionally, involved in gametophytic development. This Arabidopsis thaliana (Mouse-ear cress) protein is Jacalin-related lectin 32 (JAL32).